Consider the following 244-residue polypeptide: Derlin-2.2 (244 aa).

Residues 1–21 (MAQAVEEWYKQMPIITRSYLT) lie on the Cytoplasmic side of the membrane. Residues 22 to 42 (AAVITTVGCSLDIISPYNLYL) traverse the membrane as a helical segment. Topologically, residues 43–96 (NPTLVVKQYQYWRLVTNFLYFRKMDLDFMFHMFFLARYCKLLEENSFRGKTADF) are lumenal. The helical transmembrane segment at 97–117 (LYMLLFGASVLTGIVLIGGMI) threads the bilayer. The Cytoplasmic segment spans residues 118–121 (PYLS). A helical transmembrane segment spans residues 122 to 142 (ASFAKIIFLSNSLTFMMVYVW). The Lumenal segment spans residues 143-152 (SKQNPYIHMS). The helical transmembrane segment at 153–173 (FLGLFTFTAAYLPWVLLGFSI) threads the bilayer. Over 174-244 (LVGASAWVDL…AAPFDEIHQD (71 aa)) the chain is Cytoplasmic.

The protein belongs to the derlin family.

It is found in the endoplasmic reticulum membrane. In terms of biological role, may be involved in the degradation process of specific misfolded endoplasmic reticulum (ER) luminal proteins. The sequence is that of Derlin-2.2 (DER2.2) from Arabidopsis thaliana (Mouse-ear cress).